Here is a 335-residue protein sequence, read N- to C-terminus: Phosphate acyltransferase (335 aa).

This sequence belongs to the PlsX family. Homodimer. Probably interacts with PlsY.

The protein localises to the cytoplasm. It carries out the reaction a fatty acyl-[ACP] + phosphate = an acyl phosphate + holo-[ACP]. It functions in the pathway lipid metabolism; phospholipid metabolism. Its function is as follows. Catalyzes the reversible formation of acyl-phosphate (acyl-PO(4)) from acyl-[acyl-carrier-protein] (acyl-ACP). This enzyme utilizes acyl-ACP as fatty acyl donor, but not acyl-CoA. The chain is Phosphate acyltransferase from Desulfitobacterium hafniense (strain Y51).